Reading from the N-terminus, the 469-residue chain is MTRPVRTRFAPSPTGFIHLGNIRSALYPWAFARKMKGTFVLRIEDTDVERSSQEAVDAILEGMQWLGLDFDEGPIYQMQRMDRYRAVLAQMLEQGLAYPCYMSAEELDALRERQRAAGEKPRYDGTWRPEPGKVLPEPPAGVKPVLRFRNPLTGTVVWDDAVKGRVEISNEELDDLVIARPDGTPIYNFCVVVDDMDMNITHVIRGDDHVNNTPRQINILRALGGEPPVYAHLPTVLNEQGEKMSKRHGAMSVMAYRDAGFLPEAVVNYLARLGWSHGDAEIFSREQFVEWFDLEHLGKSPAQYDHSKLSWLNAHYIKEADNARLAALAKPFLDALGIDDAAIATGPALDAVIGLMKDRATTVKEIAEGAAMFYRVPAPDADALAQHVTDAVRPALADLAAALKAADWTKEAVSAALKATLATHKLKMPQLAMPVRLLVAGTTHTPSIDAVLVLFGRDAVVSRIEAALA.

The 'HIGH' region signature appears at 11 to 21; sequence PSPTGFIHLGN. Basic and acidic residues predominate over residues 118–131; sequence GEKPRYDGTWRPEP. Residues 118–138 are disordered; that stretch reads GEKPRYDGTWRPEPGKVLPEP. The 'KMSKS' region motif lies at 243 to 247; it reads KMSKR. Lys246 is an ATP binding site.

Belongs to the class-I aminoacyl-tRNA synthetase family. Glutamate--tRNA ligase type 1 subfamily. As to quaternary structure, monomer.

Its subcellular location is the cytoplasm. It catalyses the reaction tRNA(Glu) + L-glutamate + ATP = L-glutamyl-tRNA(Glu) + AMP + diphosphate. Functionally, catalyzes the attachment of glutamate to tRNA(Glu) in a two-step reaction: glutamate is first activated by ATP to form Glu-AMP and then transferred to the acceptor end of tRNA(Glu). The sequence is that of Glutamate--tRNA ligase from Burkholderia vietnamiensis (strain G4 / LMG 22486) (Burkholderia cepacia (strain R1808)).